Here is a 30-residue protein sequence, read N- to C-terminus: Diuretic hormone 2 (30 aa).

At V30 the chain carries Valine amide.

This sequence belongs to the sauvagine/corticotropin-releasing factor/urotensin I family.

Its subcellular location is the secreted. Functionally, regulation of fluid secretion. This Manduca sexta (Tobacco hawkmoth) protein is Diuretic hormone 2.